The sequence spans 146 residues: PTS system fructose-specific EIIA component (146 aa).

Residues 1 to 124 (MISVIISGHG…NLKAMSQQSF (124 aa)) enclose the PTS EIIA type-4 domain. His-9 functions as the Tele-phosphohistidine intermediate in the catalytic mechanism. Phosphohistidine; by HPr is present on His-9.

Its subcellular location is the cytoplasm. In terms of biological role, the phosphoenolpyruvate-dependent sugar phosphotransferase system (sugar PTS), a major carbohydrate active transport system, catalyzes the phosphorylation of incoming sugar substrates concomitantly with their translocation across the cell membrane. The enzyme II LevDE PTS system is involved in fructose transport. Functionally, levD and LevE act as negative regulators of the levanase operon. They may be involved in a PTS-mediated phosphorylation of a regulator. The protein is PTS system fructose-specific EIIA component of Bacillus subtilis (strain 168).